A 511-amino-acid polypeptide reads, in one-letter code: Bifunctional purine biosynthesis protein PurH (511 aa).

The region spanning 1–145 is the MGS-like domain; that stretch reads MKKRALVSVS…KNHKFVSVIV (145 aa).

This sequence belongs to the PurH family.

The catalysed reaction is (6R)-10-formyltetrahydrofolate + 5-amino-1-(5-phospho-beta-D-ribosyl)imidazole-4-carboxamide = 5-formamido-1-(5-phospho-D-ribosyl)imidazole-4-carboxamide + (6S)-5,6,7,8-tetrahydrofolate. It carries out the reaction IMP + H2O = 5-formamido-1-(5-phospho-D-ribosyl)imidazole-4-carboxamide. It functions in the pathway purine metabolism; IMP biosynthesis via de novo pathway; 5-formamido-1-(5-phospho-D-ribosyl)imidazole-4-carboxamide from 5-amino-1-(5-phospho-D-ribosyl)imidazole-4-carboxamide (10-formyl THF route): step 1/1. The protein operates within purine metabolism; IMP biosynthesis via de novo pathway; IMP from 5-formamido-1-(5-phospho-D-ribosyl)imidazole-4-carboxamide: step 1/1. This is Bifunctional purine biosynthesis protein PurH from Bacillus thuringiensis subsp. konkukian (strain 97-27).